The primary structure comprises 87 residues: MSERNQRKVYQGRVVSDKMDKTITVVVETYKKHSLYGKRVRYSKKLKAHDENNQAKIGDIVKVMETRPLSATKRFRLVEVVEEAVII.

This sequence belongs to the universal ribosomal protein uS17 family. In terms of assembly, part of the 30S ribosomal subunit.

Functionally, one of the primary rRNA binding proteins, it binds specifically to the 5'-end of 16S ribosomal RNA. The polypeptide is Small ribosomal subunit protein uS17 (Bacillus pumilus (strain SAFR-032)).